A 168-amino-acid chain; its full sequence is Putative F-box protein At1g30945 (168 aa).

Positions 5–52 constitute an F-box domain; the sequence is KTFDSISNDLFLEILLRLSTKSIDRSRCVSKQWASILCSQDFTESEKF.

The sequence is that of Putative F-box protein At1g30945 from Arabidopsis thaliana (Mouse-ear cress).